Reading from the N-terminus, the 156-residue chain is Transcription elongation factor GreA (156 aa).

Residues 2–27 (EKTFPMTKEGLDKLKAELENLKLVKR) are a coiled coil.

This sequence belongs to the GreA/GreB family.

Its function is as follows. Necessary for efficient RNA polymerase transcription elongation past template-encoded arresting sites. The arresting sites in DNA have the property of trapping a certain fraction of elongating RNA polymerases that pass through, resulting in locked ternary complexes. Cleavage of the nascent transcript by cleavage factors such as GreA or GreB allows the resumption of elongation from the new 3'terminus. GreA releases sequences of 2 to 3 nucleotides. In Lactococcus lactis subsp. cremoris (strain SK11), this protein is Transcription elongation factor GreA.